The primary structure comprises 281 residues: Diaminopimelate epimerase (281 aa).

Substrate is bound by residues asparagine 14 and asparagine 65. Cysteine 74 functions as the Proton donor in the catalytic mechanism. Substrate is bound by residues 75–76, asparagine 165, asparagine 198, and 216–217; these read GN and ER. Catalysis depends on cysteine 225, which acts as the Proton acceptor. 226 to 227 is a binding site for substrate; sequence GT.

Belongs to the diaminopimelate epimerase family. As to quaternary structure, homodimer.

It is found in the cytoplasm. It catalyses the reaction (2S,6S)-2,6-diaminopimelate = meso-2,6-diaminopimelate. The protein operates within amino-acid biosynthesis; L-lysine biosynthesis via DAP pathway; DL-2,6-diaminopimelate from LL-2,6-diaminopimelate: step 1/1. In terms of biological role, catalyzes the stereoinversion of LL-2,6-diaminopimelate (L,L-DAP) to meso-diaminopimelate (meso-DAP), a precursor of L-lysine and an essential component of the bacterial peptidoglycan. The chain is Diaminopimelate epimerase from Leptospira interrogans serogroup Icterohaemorrhagiae serovar copenhageni (strain Fiocruz L1-130).